Consider the following 123-residue polypeptide: MPTINQLVRNGRLRAAKKASTPALAGSPQRRGVCVRVYTSTPKKPNSALRKVARVRLTSRYEVTSYIPGIGHNLQEHSVVLVRGGRVKDLPGVRYHIVRGTLDAVGVQDRKQGRSKYGAKKPS.

Aspartate 89 is modified (3-methylthioaspartic acid).

Belongs to the universal ribosomal protein uS12 family. Part of the 30S ribosomal subunit. Contacts proteins S8 and S17. May interact with IF1 in the 30S initiation complex.

In terms of biological role, with S4 and S5 plays an important role in translational accuracy. Its function is as follows. Interacts with and stabilizes bases of the 16S rRNA that are involved in tRNA selection in the A site and with the mRNA backbone. Located at the interface of the 30S and 50S subunits, it traverses the body of the 30S subunit contacting proteins on the other side and probably holding the rRNA structure together. The combined cluster of proteins S8, S12 and S17 appears to hold together the shoulder and platform of the 30S subunit. In Syntrophus aciditrophicus (strain SB), this protein is Small ribosomal subunit protein uS12.